Consider the following 412-residue polypeptide: Serine hydroxymethyltransferase (412 aa).

Residues Leu-117 and Gly-121–Leu-123 contribute to the (6S)-5,6,7,8-tetrahydrofolate site. Lys-226 bears the N6-(pyridoxal phosphate)lysine mark.

Belongs to the SHMT family. As to quaternary structure, homodimer. It depends on pyridoxal 5'-phosphate as a cofactor.

It localises to the cytoplasm. It carries out the reaction (6R)-5,10-methylene-5,6,7,8-tetrahydrofolate + glycine + H2O = (6S)-5,6,7,8-tetrahydrofolate + L-serine. Its pathway is one-carbon metabolism; tetrahydrofolate interconversion. It participates in amino-acid biosynthesis; glycine biosynthesis; glycine from L-serine: step 1/1. In terms of biological role, catalyzes the reversible interconversion of serine and glycine with tetrahydrofolate (THF) serving as the one-carbon carrier. This reaction serves as the major source of one-carbon groups required for the biosynthesis of purines, thymidylate, methionine, and other important biomolecules. Also exhibits THF-independent aldolase activity toward beta-hydroxyamino acids, producing glycine and aldehydes, via a retro-aldol mechanism. The protein is Serine hydroxymethyltransferase of Natranaerobius thermophilus (strain ATCC BAA-1301 / DSM 18059 / JW/NM-WN-LF).